The sequence spans 496 residues: Solute carrier family 2, facilitated glucose transporter member 3 (496 aa).

The Cytoplasmic segment spans residues 1–10 (MGTQKVTPAL). A helical membrane pass occupies residues 11–32 (IFAITVATIGSFQFGYNTGVIN). The Extracellular segment spans residues 33–64 (APEKIIKEFINKTLTDKGNAPPSEVLLTSLWS). N-linked (GlcNAc...) asparagine glycosylation occurs at asparagine 43. The helical transmembrane segment at 65–85 (LSVAIFSVGGMIGSFSVGLFV) threads the bilayer. Residues 86-90 (NRFGR) are Cytoplasmic-facing. The chain crosses the membrane as a helical span at residues 91 to 111 (RNSMLIVNLLAVTGGCFMGLC). Residues 112-118 (KVAKSVE) lie on the Extracellular side of the membrane. A helical transmembrane segment spans residues 119–142 (MLILGRLVIGLFCGLCTGFVPMYI). Topologically, residues 143–153 (GEISPTALRGA) are cytoplasmic. Residues 154–174 (FGTLNQLGIVVGILVAQIFGL) traverse the membrane as a helical segment. Glutamine 159 lines the D-glucose pocket. The Extracellular portion of the chain corresponds to 175 to 183 (EFILGSEEL). The helical transmembrane segment at 184 to 204 (WPLLLGFTILPAILQSAALPF) threads the bilayer. Residues 205-269 (CPESPRFLLI…LFRVSSYRQP (65 aa)) lie on the Cytoplasmic side of the membrane. Threonine 232 is subject to Phosphothreonine. A helical membrane pass occupies residues 270 to 290 (IIISIVLQLSQQLSGINAVFY). The important for selectivity against fructose stretch occupies residues 277-279 (QLS). Residues 280-281 (QQ) and asparagine 286 each bind D-glucose. Residues 291 to 304 (YSTGIFKDAGVQEP) lie on the Extracellular side of the membrane. Residues 305–325 (IYATIGAGVVNTIFTVVSLFL) traverse the membrane as a helical segment. Asparagine 315 is a binding site for D-glucose. At 326–331 (VERAGR) the chain is on the cytoplasmic side. A helical membrane pass occupies residues 332–352 (RTLHMIGLGGMAFCSTLMTVS). Residues 353-363 (LLLKDNYNGMS) are Extracellular-facing. A helical membrane pass occupies residues 364 to 389 (FVCIGAILVFVAFFEIGPGPIPWFIV). D-glucose contacts are provided by glutamate 378 and tryptophan 386. Residues 390–399 (AELFSQGPRP) are Cytoplasmic-facing. A helical membrane pass occupies residues 400–420 (AAMAVAGCSNWTSNFLVGLLF). Residues 421–429 (PSAAHYLGA) are Extracellular-facing. The chain crosses the membrane as a helical span at residues 430–450 (YVFIIFTGFLITFLAFTFFKV). Over 451–496 (PETRGRTFEDITRAFEGQAHGADRSGKDGVMEMNSIEPAKETTTNV) the chain is Cytoplasmic. Residues serine 475 and serine 485 each carry the phosphoserine modification. Threonine 492 carries the post-translational modification Phosphothreonine.

This sequence belongs to the major facilitator superfamily. Sugar transporter (TC 2.A.1.1) family. Glucose transporter subfamily. In terms of assembly, interacts with SMIM43; the interaction may promote SLC2A3-mediated glucose transport to meet the energy needs of mesendoderm differentiation. In terms of tissue distribution, highly expressed in brain. Expressed in many tissues.

The protein localises to the cell membrane. Its subcellular location is the perikaryon. It localises to the cell projection. The enzyme catalyses D-glucose(out) = D-glucose(in). The catalysed reaction is D-galactose(in) = D-galactose(out). Deoxyglucose transport is inhibited by D-glucose, D-galactose and maltose. Galactose transport is inhibited by D-glucose and maltose. Functionally, facilitative glucose transporter. Can also mediate the uptake of various other monosaccharides across the cell membrane. Mediates the uptake of glucose, 2-deoxyglucose, galactose, mannose, xylose and fucose, and probably also dehydroascorbate. Does not mediate fructose transport. Required for mesendoderm differentiation. The protein is Solute carrier family 2, facilitated glucose transporter member 3 of Homo sapiens (Human).